The chain runs to 281 residues: MRVRKPAVAGYFYESGREELLQQIEWAVKHELGPKALQMPKLGGEALGGVAPHAGYMYSGPVAAWLYSALAGYGKPDVFVIVGPNHYGIGAPVAIMKSGAWETPLGRVEVDRELAEVITSHFKEVEDDFYAFSKEHSVEVQVPFIQYYFGDVKIVPIVMWRQTLSTSRELGRAIAKALKEYGRKAYVIASSDFNHYEPHDITTRKDEMAISKILKLDEAGLFEISSKFDISICGIGPIGVLIAAAKELGYINVTLLKHATSGDTSGYKDETVGYASILFYR.

It belongs to the MEMO1 family.

The chain is MEMO1 family protein PAE0818 from Pyrobaculum aerophilum (strain ATCC 51768 / DSM 7523 / JCM 9630 / CIP 104966 / NBRC 100827 / IM2).